Here is a 338-residue protein sequence, read N- to C-terminus: Replication factor C small subunit (338 aa).

Residue 53–60 participates in ATP binding; sequence GPPGVGKT.

This sequence belongs to the activator 1 small subunits family. RfcS subfamily. In terms of assembly, heteromultimer composed of small subunits (RfcS) and large subunits (RfcL).

In terms of biological role, part of the RFC clamp loader complex which loads the PCNA sliding clamp onto DNA. The chain is Replication factor C small subunit from Methanosarcina acetivorans (strain ATCC 35395 / DSM 2834 / JCM 12185 / C2A).